Reading from the N-terminus, the 117-residue chain is MVSEAEFMAALAKFAETSATASAAADRVIAVANVDASRIADEFNALLGWAMKIATLLLEEISKNPSLKAEMAESHQMLFGNLGTIVPALLKFGPYINQILGNFGLSLGKLFGIVLAF.

Positions 1 to 23 (MVSEAEFMAALAKFAETSATASA) are cleaved as a signal peptide.

This is an uncharacterized protein from Archaeoglobus fulgidus (strain ATCC 49558 / DSM 4304 / JCM 9628 / NBRC 100126 / VC-16).